Here is a 537-residue protein sequence, read N- to C-terminus: Eukaryotic translation initiation factor 3 subunit L (537 aa).

A compositionally biased stretch (basic and acidic residues) spans 1 to 19; it reads MSRRVEFDMSHEDHTDRRR. The segment at 1-28 is disordered; it reads MSRRVEFDMSHEDHTDRRRTNTFSSEED. The PCI domain occupies 297 to 485; that stretch reads EATKMFVNCL…GPSTVDDDEP (189 aa).

Belongs to the eIF-3 subunit L family. As to quaternary structure, component of the eukaryotic translation initiation factor 3 (eIF-3) complex.

It localises to the cytoplasm. Functionally, component of the eukaryotic translation initiation factor 3 (eIF-3) complex, which is involved in protein synthesis of a specialized repertoire of mRNAs and, together with other initiation factors, stimulates binding of mRNA and methionyl-tRNAi to the 40S ribosome. The eIF-3 complex specifically targets and initiates translation of a subset of mRNAs involved in cell proliferation. The protein is Eukaryotic translation initiation factor 3 subunit L of Caenorhabditis briggsae.